Reading from the N-terminus, the 291-residue chain is Ribose-phosphate pyrophosphokinase (291 aa).

ATP is bound by residues 34-36 (DGE) and 93-94 (RQ). Positions 127 and 165 each coordinate Mg(2+). Residue K188 is part of the active site. D-ribose 5-phosphate-binding positions include R190, D216, and 220–224 (STGGT).

Belongs to the ribose-phosphate pyrophosphokinase family. Class III (archaeal) subfamily. Requires Mg(2+) as cofactor.

The protein localises to the cytoplasm. The catalysed reaction is D-ribose 5-phosphate + ATP = 5-phospho-alpha-D-ribose 1-diphosphate + AMP + H(+). It participates in metabolic intermediate biosynthesis; 5-phospho-alpha-D-ribose 1-diphosphate biosynthesis; 5-phospho-alpha-D-ribose 1-diphosphate from D-ribose 5-phosphate (route I): step 1/1. Its function is as follows. Involved in the biosynthesis of the central metabolite phospho-alpha-D-ribosyl-1-pyrophosphate (PRPP) via the transfer of pyrophosphoryl group from ATP to 1-hydroxyl of ribose-5-phosphate (Rib-5-P). The sequence is that of Ribose-phosphate pyrophosphokinase from Sulfolobus acidocaldarius (strain ATCC 33909 / DSM 639 / JCM 8929 / NBRC 15157 / NCIMB 11770).